We begin with the raw amino-acid sequence, 263 residues long: MAFLWLVSCFALVGATFGCGVPAIQPVLTGLSRIVNGEDAIPGSWPWQVSLQDRTGFHFCGGSLISENWVVTAAHCGVKTTDVVVAGEFDQGSDEENVQVLKIAQVFKNPKFNSFTVRNDITLLKLATPAQFSETVSAVCLPTVDDDFPAGTLCATTGWGKTKYNALKTPDKLQQAALPIVSEAKCKESWGSKITDVMICAGASGVSSCMGDSGGPLVCQKDGVWTLAGIVSWGSGFCSTSTPAVYARVTALMPWVQEILEAN.

A signal peptide spans 1-18 (MAFLWLVSCFALVGATFG). 5 disulfides stabilise this stretch: Cys19–Cys140, Cys60–Cys76, Cys154–Cys219, Cys186–Cys200, and Cys209–Cys238. A Peptidase S1 domain is found at 34-261 (IVNGEDAIPG…LMPWVQEILE (228 aa)). His75 acts as the Charge relay system in catalysis. Ser93 carries the phosphoserine modification. Asp120 serves as the catalytic Charge relay system. The active-site Charge relay system is the Ser213.

It belongs to the peptidase S1 family.

It is found in the secreted. The protein localises to the extracellular space. The enzyme catalyses Preferential cleavage: Tyr-|-Xaa, Trp-|-Xaa, Phe-|-Xaa, Leu-|-Xaa.. The protein is Chymotrypsinogen B (Ctrb1) of Mus musculus (Mouse).